A 77-amino-acid chain; its full sequence is Dermatoxin-B1 (77 aa).

An N-terminal signal peptide occupies residues 1-22; sequence MAFLKKSLFLVLFLGLVPLSLC. A propeptide spanning residues 23 to 42 is cleaved from the precursor; it reads ESEKREGENEEEQEDDQSEE. Positions 24 to 45 are disordered; sequence SEKREGENEEEQEDDQSEEKRS. Residues 30–40 are compositionally biased toward acidic residues; it reads ENEEEQEDDQS. Residue Gln76 is modified to Glutamine amide.

Belongs to the frog skin active peptide (FSAP) family. Dermatoxin subfamily. As to expression, highest expression in skin and to a lesser extent in brain and intestine.

It is found in the secreted. The protein localises to the target cell membrane. Its function is as follows. Possesses a potent antimicrobial activity against Gram-positive bacteria B.megaterium, C.glutamicum and S.aureus and mollicutes A.laidlawii and S.melliferum. Less active against Gram-negative bacteria B.cepacia, P.aeruginosa, S.typhimurium and S.meliloti. Probably acts by disturbing membrane functions with its amphipathic structure. The polypeptide is Dermatoxin-B1 (Phyllomedusa bicolor (Two-colored leaf frog)).